We begin with the raw amino-acid sequence, 205 residues long: ATP phosphoribosyltransferase (205 aa).

Belongs to the ATP phosphoribosyltransferase family. Short subfamily. Heteromultimer composed of HisG and HisZ subunits.

The protein localises to the cytoplasm. The enzyme catalyses 1-(5-phospho-beta-D-ribosyl)-ATP + diphosphate = 5-phospho-alpha-D-ribose 1-diphosphate + ATP. It participates in amino-acid biosynthesis; L-histidine biosynthesis; L-histidine from 5-phospho-alpha-D-ribose 1-diphosphate: step 1/9. Catalyzes the condensation of ATP and 5-phosphoribose 1-diphosphate to form N'-(5'-phosphoribosyl)-ATP (PR-ATP). Has a crucial role in the pathway because the rate of histidine biosynthesis seems to be controlled primarily by regulation of HisG enzymatic activity. The sequence is that of ATP phosphoribosyltransferase from Vesicomyosocius okutanii subsp. Calyptogena okutanii (strain HA).